A 750-amino-acid polypeptide reads, in one-letter code: Photosystem I P700 chlorophyll a apoprotein A1 (750 aa).

The next 8 membrane-spanning stretches (helical) occupy residues 70–93 (IFSAHFGQLSIIFLWLSGMYFHGA), 156–179 (LYCTAIGALVFAALMLFAGWFHYH), 195–219 (LNHHLAGLLGLGSLSWAGHQVHVSL), 291–309 (IAHHHLAIAILFLIAGHMY), 346–369 (WHAQLALNLAMLGSLTIVVAHHMY), 385–411 (LSLFTHHMWIGGFLIVGAAAHAAIFMV), 433–455 (AIISHLNWACIFLGFHSFGLYIH), and 531–549 (FLVHHIHAFTIHVTVLILL). The [4Fe-4S] cluster site is built by Cys573 and Cys582. Transmembrane regions (helical) follow at residues 589–610 (HVFLGLFWMYNAISVVIFHFSW) and 664–686 (LSAYGLFFLGAHFVWAFSLMFLF). His675 is a binding site for chlorophyll a'. Chlorophyll a contacts are provided by Met683 and Tyr691. Residue Trp692 participates in phylloquinone binding. A helical membrane pass occupies residues 724–744 (AVGVTHYLLGGIATTWAFFLA).

This sequence belongs to the PsaA/PsaB family. The PsaA/B heterodimer binds the P700 chlorophyll special pair and subsequent electron acceptors. PSI consists of a core antenna complex that captures photons, and an electron transfer chain that converts photonic excitation into a charge separation. The eukaryotic PSI reaction center is composed of at least 11 subunits. The cofactor is P700 is a chlorophyll a/chlorophyll a' dimer, A0 is one or more chlorophyll a, A1 is one or both phylloquinones and FX is a shared 4Fe-4S iron-sulfur center..

It localises to the plastid. The protein resides in the chloroplast thylakoid membrane. It catalyses the reaction reduced [plastocyanin] + hnu + oxidized [2Fe-2S]-[ferredoxin] = oxidized [plastocyanin] + reduced [2Fe-2S]-[ferredoxin]. In terms of biological role, psaA and PsaB bind P700, the primary electron donor of photosystem I (PSI), as well as the electron acceptors A0, A1 and FX. PSI is a plastocyanin-ferredoxin oxidoreductase, converting photonic excitation into a charge separation, which transfers an electron from the donor P700 chlorophyll pair to the spectroscopically characterized acceptors A0, A1, FX, FA and FB in turn. Oxidized P700 is reduced on the lumenal side of the thylakoid membrane by plastocyanin. The chain is Photosystem I P700 chlorophyll a apoprotein A1 from Nandina domestica (Heavenly bamboo).